The chain runs to 2039 residues: Methylcytosine dioxygenase TET1 (2039 aa).

The span at 1–19 (MSRSRPAKPSKSVKTKLQK) shows a compositional bias: basic residues. Disordered regions lie at residues 1-79 (MSRS…AGAA), 119-168 (VVTP…NGEQ), and 227-286 (DNEC…GFPD). Basic and acidic residues-rich tracts occupy residues 53 to 65 (KRRD…EDKT) and 138 to 149 (IQDEPGVKHSEN). 2 stretches are compositionally biased toward polar residues: residues 150–168 (DSVP…NGEQ) and 241–265 (QRST…SQVE). Residues 512 to 657 (LDLTQGSQAA…NGPKSESMDC (146 aa)) are sufficient for binding to genomic CpG islands. The segment at 567-608 (ERRKRKACGVCEPCQQKANCGECTYCKNRKNSHQICKKRKCE) adopts a CXXC-type zinc-finger fold. Cysteine 574, cysteine 577, cysteine 580, cysteine 586, cysteine 589, cysteine 592, cysteine 602, and cysteine 607 together coordinate Zn(2+). Disordered regions lie at residues 613 to 670 (KPEA…QRLD), 711 to 735 (CDAN…NPSP), 820 to 859 (GAEP…VQPS), 882 to 906 (QLSE…HQKT), 964 to 993 (QGYP…SHPL), 1050 to 1129 (VRNA…KKQE), 1209 to 1240 (VEPS…QGQP), and 1322 to 1341 (KREA…DSAQ). Residues 653 to 670 (ESMDCSRRGHGEEEQRLD) are compositionally biased toward basic and acidic residues. Polar residues predominate over residues 825-835 (IFNNHPNTHSA). Positions 840 to 852 (HPPEKVPNKEPKD) are enriched in basic and acidic residues. Serine 854 is subject to Phosphoserine. Over residues 884-894 (SEAPSESSSPS) the composition is skewed to low complexity. Positions 895–904 (KPEKDEEAHQ) are enriched in basic and acidic residues. Polar residues predominate over residues 1053–1064 (AESTPESLVAKN). Over residues 1094-1116 (KPKKAQKKARATPHANKRKKKPP) the composition is skewed to basic residues. 2 stretches are compositionally biased toward polar residues: residues 1214 to 1227 (SLPT…SGGQ) and 1326 to 1341 (QTSS…DSAQ). Residues cysteine 1371, cysteine 1373, cysteine 1430, histidine 1456, and cysteine 1458 each coordinate Zn(2+). Arginine 1499 is a binding site for 2-oxoglutarate. Zn(2+) contacts are provided by cysteine 1509, cysteine 1511, cysteine 1527, and cysteine 1536. An interaction with DNA region spans residues 1528–1541 (SWSMYFNGCKFGRS). Residue lysine 1537 forms a Glycyl lysine isopeptide (Lys-Gly) (interchain with G-Cter in ubiquitin) linkage. Zn(2+) is bound at residue cysteine 1628. Position 1644 (cysteine 1644) interacts with 2-oxoglutarate. Residue histidine 1650 participates in Zn(2+) binding. Histidine 1652 and aspartate 1654 together coordinate Fe cation. Asparagine 1657 is a binding site for substrate. Histidine 1685 contributes to the 2-oxoglutarate binding site. Residues 1734-1743 (GKRAKMKQNH) show a composition bias toward basic residues. Disordered stretches follow at residues 1734 to 1760 (GKRA…ASST) and 1830 to 1901 (AAHP…LPQL). The segment covering 1748 to 1760 (SHNTKSFSSASST) has biased composition (low complexity). Residues 1850–1875 (TSPSEQLTSNQSNQQLPLLSNSQKLA) are compositionally biased toward polar residues. Positions 1880 to 1895 (EDERHPEADEPQHPED) are enriched in basic and acidic residues. Histidine 1939 contributes to the Fe cation binding site. 1954-1956 (RVS) provides a ligand contact to 2-oxoglutarate. A substrate-binding site is contributed by 1960 to 1962 (YQH). Residue histidine 1970 coordinates Zn(2+).

Belongs to the TET family. In terms of assembly, interacts with SIN3A; recruits the transcriptional co-repressor SIN3A to gene promoters. Interacts with HCFC1. Interacts (via C-terminus) with OGT. Found in a complex composed of at least SINHCAF, SIN3A, HDAC1, SAP30, RBBP4, OGT and TET1. Interacts with QSER1. Interacts with NONO (via DNA-binding domain); this interaction recruits TET1 to genomic loci. Interacts with FOXA2; this interaction may recruit TET1 to specific enhancers to preserve their unmethylated status and hence allowing gene expression. Interacts with RNF2. Directly interacts (via C-terminus) with the DCAF1 component of the CRL4(VprBP) E3 ubiquitin-protein ligase complex. As to quaternary structure, interacts with UHRF1; this interaction induces the recruitment of TET1 to replicating heterochromatin. Interacts with DCAF1. Fe(2+) is required as a cofactor. Zn(2+) serves as cofactor. Glycosylated. Interaction with OGT leads to GlcNAcylation. In terms of processing, monoubiquitinated by the DCX (DDB1-CUL4-X-box) E3 ubiquitin-protein ligase complex called CRL4(VprBP) or CUL4A-RBX1-DDB1-DCAF1/VPRBP complex. Post-translationally, monoubiquitinated by the DCX (DDB1-CUL4-X-box) E3 ubiquitin-protein ligase complex called CRL4(VprBP) or CUL4A-RBX1-DDB1-DCAF1/VPRBP complex; this modification promotes binding to DNA. In terms of tissue distribution, expressed in germinal vesicle (GV) stage and MII-stage oocytes and in early embryos. Also detected somatic tissues, including brain, liver and kidney, but at very low levels. As to expression, predominantly expressed in early embryos. Also expressed in embryonic stem cells and in primordial germ cells. Expressed in adult tissues, including brain cortex, cerebellum, heart, kidney, liver, muscle and spleen, although at much lower levels than isoform 2. In the brain, expressed at higher levels in glial cells than in neurons. Expressed in placenta. Expressed in the pituitary, most probably in thyrotropes. Preferentially expressed in differentiated cells, including in cerebral cortex, cerebellum and thymus. Also expressed in heart, kidney, liver, muscle and spleen at much higher levels than isoform 1. In the brain, expressed at higher levels in neurons than in glial cells. Expressed in the olfactory bulb and in the mammary gland.

Its subcellular location is the nucleus. It localises to the chromosome. It carries out the reaction a 5-methyl-2'-deoxycytidine in DNA + 2-oxoglutarate + O2 = a 5-hydroxymethyl-2'-deoxycytidine in DNA + succinate + CO2. It catalyses the reaction a 5-hydroxymethyl-2'-deoxycytidine in DNA + 2-oxoglutarate + O2 = a 5-formyl-2'-deoxycytidine in DNA + succinate + CO2 + H2O. The enzyme catalyses a 5-formyl-2'-deoxycytidine in DNA + 2-oxoglutarate + O2 = a 5-carboxyl-2'-deoxycytidine in DNA + succinate + CO2 + H(+). Functionally, dioxygenase that plays a key role in active DNA demethylation, by catalyzing the sequential oxidation of the modified genomic base 5-methylcytosine (5mC) into 5-hydroxymethylcytosine (5hmC), 5-formylcytosine (5fC), and 5-carboxylcytosine (5caC). In addition to its role in DNA demethylation, plays a more general role in chromatin regulation by recruiting histone modifying protein complexes to alter histone marks and chromatin accessibility, leading to both activation and repression of gene expression. Plays therefore a role in many biological processes, including stem cell maintenance, T- and B-cell development, inflammation regulation, iron homeostasis, neural activity or DNA repair. Involved in the balance between pluripotency and lineage commitment of cells it plays a role in embryonic stem cells maintenance and inner cell mass cell specification. Together with QSER1, plays an essential role in the protection and maintenance of transcriptional and developmental programs to inhibit the binding of DNMT3A/3B and therefore de novo methylation. May play a role in the pancreatic beta-cell specification during development. In this context, may function as an upstream epigenetic regulator of PAX4 presumably through direct recruitment by FOXA2 to a PAX4 enhancer to preserve its unmethylated status, thereby potentiating PAX4 expression to adopt beta-cell fate during endocrine lineage commitment. Under DNA hypomethylation conditions, such as in female meiotic germ cells, may induce epigenetic reprogramming of pericentromeric heterochromatin (PCH), the constitutive heterochromatin of pericentromeric regions. PCH forms chromocenters in the interphase nucleus and chromocenters cluster at the prophase of meiosis. In this context, may also be essential for chromocenter clustering in a catalytic activity-independent manner, possibly through the recruitment polycomb repressive complex 1 (PRC1) to the chromocenters. During embryonic development, may be required for normal meiotic progression in oocytes and meiotic gene activation. Binds preferentially to DNA containing cytidine-phosphate-guanosine (CpG) dinucleotides over CpH (H=A, T, and C), hemimethylated-CpG and hemimethylated-hydroxymethyl-CpG. Dioxygenase that plays a key role in active DNA demethylation. Binds to promoters, particularly to those with high CG content. In hippocampal neurons, isoform 1 regulates the expression of a unique subset of genes compared to isoform 2, although some overlap between both isoforms, hence differentially regulates excitatory synaptic transmission. In hippocampal neuron cell cultures, isoform 1 controls both miniature excitatory postsynaptic current amplitude and frequency. Isoform 1 may regulate genes involved in hippocampal-dependent memory, leading to positive regulation of memory, contrary to isoform 2 that may decrease memory. In terms of biological role, dioxygenase that plays a key role in active DNA demethylation. As isoform 1, binds to promoters, particularly to those with high CG content, however displays reduced global chromatin affinity compared with isoform 1, leading to decreased global DNA demethylation compared with isoform 1. Contrary to isoform 1, isoform 2 localizes during S phase to sites of ongoing DNA replication in heterochromatin, causing a significant de novo 5hmC formation, globally, and more so in heterochromatin, including LINE 1 interspersed DNA repeats leading to their activation. In hippocampal neurons, isoform 2 regulates the expression of a unique subset of genes compared with isoform 1, although some overlap between both isoforms, hence differentially regulating excitatory synaptic transmission. In hippocampal neuron cell cultures, isoform 2 controls miniature excitatory postsynaptic current frequency, but not amplitude. Isoform 2 may regulate genes involved in hippocampal-dependent memory, leading to negative regulation of memory, contrary to isoform 1 that may improve memory. In immature and partially differentiated gonadotrope cells, represses luteinizing hormone gene LHB expression directly and does not catalyze 5hmC at the gene promoter. This is Methylcytosine dioxygenase TET1 (Tet1) from Mus musculus (Mouse).